Consider the following 255-residue polypeptide: ParA family protein TC_0871 (255 aa).

It belongs to the ParA family.

This chain is ParA family protein TC_0871, found in Chlamydia muridarum (strain MoPn / Nigg).